The following is a 46-amino-acid chain: Mu-segestritoxin-Sf1d (46 aa).

4 disulfides stabilise this stretch: C3–C19, C10–C22, C18–C42, and C24–C40. Positions 31-33 (RPW) are keys region for toxin activity.

The protein belongs to the neurotoxin 16 (SFI) family. Expressed by the venom gland.

It localises to the secreted. In terms of biological role, insecticidal toxin. It inhibits insect voltage-gated sodium channels (Nav) by partially blocking the channel pore in DUM neurons from the American cockroach, not by acting as a gating modifier. The inhibition is only partially reversible after prolonged washout. In vivo, the toxin causes flaccid paralysis followed by death when injected into Heliothis virescens larvae. It also causes uncoordinated movements followed by full paralysis to sheep blowflies (Lucilia cuprina). When the toxin is fused to snowdrop lectin, it is orally active against larvae of the tomato moth (Laconobia oleracea), the rice brown planthopper (Nilaparvata lugens), and the peach-potato aphid (Myzus persicae). In Segestria florentina (Tube-web spider), this protein is Mu-segestritoxin-Sf1d.